The primary structure comprises 393 residues: Pyrimidine monooxygenase RutA (393 aa).

FMN is bound by residues 79 to 80 (IK), N145, E154, 170 to 171 (RY), and S220.

Belongs to the NtaA/SnaA/DszA monooxygenase family. RutA subfamily.

The enzyme catalyses uracil + FMNH2 + NADH + O2 = (Z)-3-ureidoacrylate + FMN + NAD(+) + H2O + H(+). The catalysed reaction is thymine + FMNH2 + NADH + O2 = (Z)-2-methylureidoacrylate + FMN + NAD(+) + H2O + H(+). Functionally, catalyzes the pyrimidine ring opening between N-3 and C-4 by an unusual flavin hydroperoxide-catalyzed mechanism, adding oxygen atoms in the process to yield ureidoacrylate peracid, that immediately reacts with FMN forming ureidoacrylate and FMN-N(5)-oxide. The FMN-N(5)-oxide reacts spontaneously with NADH to produce FMN. Requires the flavin reductase RutF to regenerate FMN in vivo. This is Pyrimidine monooxygenase RutA from Escherichia coli O18:K1:H7 (strain IHE3034 / ExPEC).